The sequence spans 175 residues: Cytochrome c homolog (175 aa).

At 1–8 (MTGKELNK) the chain is on the cytoplasmic side. A helical; Signal-anchor membrane pass occupies residues 9-29 (IVAAILFASLIAMIVRFVANI). Over 30 to 175 (LYKPNLQVLN…LFLKNYVHDK (146 aa)) the chain is Periplasmic. Heme c contacts are provided by cysteine 84, cysteine 87, histidine 88, and methionine 150.

It belongs to the cytochrome c family. In terms of processing, binds 1 heme c group covalently per subunit.

It is found in the cell membrane. In terms of biological role, may be involved in electron transfer from bc1 complex to aa3. In Rickettsia typhi (strain ATCC VR-144 / Wilmington), this protein is Cytochrome c homolog (cycM).